A 410-amino-acid polypeptide reads, in one-letter code: Protein translocase subunit SecY 2 (410 aa).

The next 10 membrane-spanning stretches (helical) occupy residues 2–22 (ILII…SAAL), 45–65 (FSIM…VQLL), 94–114 (LTLV…NTLT), 125–145 (FTII…MWLG), 147–167 (LITE…GILV), 188–208 (WIRF…IVWF), 241–261 (VIPV…LMFF), 284–304 (GVII…IVQI), 339–359 (YLSL…LLVA), and 366–386 (LQIG…IEIG).

Belongs to the SecY/SEC61-alpha family. As to quaternary structure, component of the Sec protein translocase complex. Heterotrimer consisting of SecY, SecE and SecG subunits. The heterotrimers can form oligomers, although 1 heterotrimer is thought to be able to translocate proteins. Interacts with the ribosome. Interacts with SecDF, and other proteins may be involved. Interacts with SecA.

It is found in the cell membrane. In terms of biological role, the central subunit of the protein translocation channel SecYEG. Consists of two halves formed by TMs 1-5 and 6-10. These two domains form a lateral gate at the front which open onto the bilayer between TMs 2 and 7, and are clamped together by SecE at the back. The channel is closed by both a pore ring composed of hydrophobic SecY resides and a short helix (helix 2A) on the extracellular side of the membrane which forms a plug. The plug probably moves laterally to allow the channel to open. The ring and the pore may move independently. This is Protein translocase subunit SecY 2 from Lactobacillus kefiranofaciens subsp. kefiranofaciens.